The sequence spans 120 residues: Spermidine export protein MdtJ (120 aa).

Transmembrane regions (helical) follow at residues 1–21, 31–51, 54–74, and 81–101; these read MFYW…TLSM, AGFI…SFAV, IALG…ITIF, and EALS…IVLI.

Belongs to the drug/metabolite transporter (DMT) superfamily. Small multidrug resistance (SMR) (TC 2.A.7.1) family. MdtJ subfamily. In terms of assembly, forms a complex with MdtI.

It localises to the cell inner membrane. Its function is as follows. Catalyzes the excretion of spermidine. The protein is Spermidine export protein MdtJ of Salmonella paratyphi A (strain ATCC 9150 / SARB42).